The chain runs to 70 residues: Large ribosomal subunit protein bL31 (70 aa).

Zn(2+) contacts are provided by Cys-16, Cys-18, Cys-37, and Cys-40.

The protein belongs to the bacterial ribosomal protein bL31 family. Type A subfamily. In terms of assembly, part of the 50S ribosomal subunit. It depends on Zn(2+) as a cofactor.

In terms of biological role, binds the 23S rRNA. The polypeptide is Large ribosomal subunit protein bL31 (Klebsiella pneumoniae (strain 342)).